A 245-amino-acid polypeptide reads, in one-letter code: 1-(5-phosphoribosyl)-5-[(5-phosphoribosylamino)methylideneamino] imidazole-4-carboxamide isomerase (245 aa).

Asp-8 (proton acceptor) is an active-site residue. The active-site Proton donor is Asp-129.

Belongs to the HisA/HisF family.

It localises to the cytoplasm. It carries out the reaction 1-(5-phospho-beta-D-ribosyl)-5-[(5-phospho-beta-D-ribosylamino)methylideneamino]imidazole-4-carboxamide = 5-[(5-phospho-1-deoxy-D-ribulos-1-ylimino)methylamino]-1-(5-phospho-beta-D-ribosyl)imidazole-4-carboxamide. Its pathway is amino-acid biosynthesis; L-histidine biosynthesis; L-histidine from 5-phospho-alpha-D-ribose 1-diphosphate: step 4/9. In Rhodopseudomonas palustris (strain BisB5), this protein is 1-(5-phosphoribosyl)-5-[(5-phosphoribosylamino)methylideneamino] imidazole-4-carboxamide isomerase.